A 755-amino-acid polypeptide reads, in one-letter code: MDYFLFIALTFLLTFHVHNAQGSELPTTTTESTETSSSKIYIIHVTGPEGKMLTESEDLESWYHSFLPPTLMSSEEQPRVIYSYKNVLRGFAASLTQEELSAVEKKNGFISAHPQRVLHRQTTHTPKFLGLQQDTGVWKESNFGKGVIIGVLDSGITPGHPSFSDVGIPPPPPKWKGRCDLNVTACNNKLIGARAFNLAAEAMNGKKAEAPIDEDGHGTHTASTAAGAFVNYAEVLGNAKGTAAGMAPHAHLAIYKVCFGEDCPESDILAALDAAVEDGVDVISISLGLSEPPPFFNDSTAIGAFAAMQKGIFVSCAAGNSGPFNSSIVNAAPWILTVGASTIDRRIVATAKLGNGQEFDGESVFQPSSFTPTLLPLAYAGKNGKEESAFCANGSLDDSAFRGKVVLCERGGGIARIAKGEEVKRAGGAAMILMNDETNAFSLSADVHALPATHVSYAAGIEIKAYINSTATPTATILFKGTVIGNSLAPAVASFSSRGPNLPSPGILKPDIIGPGVNILAAWPFPLSNSTDSKLTFNIESGTSMSCPHLSGIAALLKSSHPHWSPAAIKSAIMTSADTINLGNKLIVDETLQPTDLFATGSGHVNPSRANDPGLVYDIQPDDYIPYLCGLGYSETEVGIIAHRKIKCSASIPEGELNYPSFSVELGSSKTFTRTVTNVGEAHSSYDLIVAAPQGVDVKVQPYKLNFSEVNQKETYSVTFSRTGLGNKTQEYAQGFLKWVSTKHTVRSPISVKFI.

The first 20 residues, 1–20, serve as a signal peptide directing secretion; sequence MDYFLFIALTFLLTFHVHNA. The Inhibitor I9 domain occupies 41-119; that stretch reads YIIHVTGPEG…ISAHPQRVLH (79 aa). Residues 128-611 form the Peptidase S8 domain; it reads FLGLQQDTGV…SGHVNPSRAN (484 aa). The active-site Charge relay system is the Asp-153. Residue Asn-182 is glycosylated (N-linked (GlcNAc...) asparagine). Catalysis depends on His-217, which acts as the Charge relay system. Asn-297, Asn-325, Asn-393, Asn-468, and Asn-529 each carry an N-linked (GlcNAc...) asparagine glycan. The 86-residue stretch at 376–461 folds into the PA domain; that stretch reads PLAYAGKNGK…ATHVSYAAGI (86 aa). Ser-544 (charge relay system) is an active-site residue. N-linked (GlcNAc...) asparagine glycosylation is found at Asn-706 and Asn-727.

It belongs to the peptidase S8 family.

It localises to the secreted. Its subcellular location is the extracellular space. The protein localises to the apoplast. In terms of biological role, required for arbuscular mycorrhiza (AM) development during AM symbiosis with AM fungi (e.g. Glomeromycota intraradices). The chain is Subtilisin-like protease 4 from Lotus japonicus (Lotus corniculatus var. japonicus).